A 244-amino-acid polypeptide reads, in one-letter code: tRNA (guanine-N(1)-)-methyltransferase (244 aa).

S-adenosyl-L-methionine contacts are provided by residues Gly113 and 133–138 (IGDYVL).

The protein belongs to the RNA methyltransferase TrmD family. Homodimer.

The protein localises to the cytoplasm. It catalyses the reaction guanosine(37) in tRNA + S-adenosyl-L-methionine = N(1)-methylguanosine(37) in tRNA + S-adenosyl-L-homocysteine + H(+). Specifically methylates guanosine-37 in various tRNAs. The chain is tRNA (guanine-N(1)-)-methyltransferase from Bacillus cereus (strain G9842).